A 529-amino-acid chain; its full sequence is Putative amidohydrolase YtcJ (529 aa).

Belongs to the metallo-dependent hydrolases superfamily.

The chain is Putative amidohydrolase YtcJ (ytcJ) from Bacillus subtilis (strain 168).